The following is a 413-amino-acid chain: Arginine biosynthesis bifunctional protein ArgJ (413 aa).

Positions 158, 184, 195, 285, 408, and 413 each coordinate substrate. Threonine 195 acts as the Nucleophile in catalysis.

It belongs to the ArgJ family. As to quaternary structure, heterotetramer of two alpha and two beta chains.

It is found in the cytoplasm. It carries out the reaction N(2)-acetyl-L-ornithine + L-glutamate = N-acetyl-L-glutamate + L-ornithine. The catalysed reaction is L-glutamate + acetyl-CoA = N-acetyl-L-glutamate + CoA + H(+). The protein operates within amino-acid biosynthesis; L-arginine biosynthesis; L-ornithine and N-acetyl-L-glutamate from L-glutamate and N(2)-acetyl-L-ornithine (cyclic): step 1/1. Its pathway is amino-acid biosynthesis; L-arginine biosynthesis; N(2)-acetyl-L-ornithine from L-glutamate: step 1/4. Catalyzes two activities which are involved in the cyclic version of arginine biosynthesis: the synthesis of N-acetylglutamate from glutamate and acetyl-CoA as the acetyl donor, and of ornithine by transacetylation between N(2)-acetylornithine and glutamate. This is Arginine biosynthesis bifunctional protein ArgJ from Agrobacterium fabrum (strain C58 / ATCC 33970) (Agrobacterium tumefaciens (strain C58)).